The following is a 269-amino-acid chain: Phosphatidate cytidylyltransferase (269 aa).

8 helical membrane passes run 13-33 (LAAI…TILI), 50-70 (LKLV…FLLP), 81-101 (ISKM…TVLV), 110-130 (VGFI…FIEI), 138-158 (LTYI…AYFV), 180-200 (FAGG…VAQL), 201-221 (PIPY…GQLG), and 247-267 (ILDR…LLAL).

Belongs to the CDS family.

It localises to the cell membrane. It catalyses the reaction a 1,2-diacyl-sn-glycero-3-phosphate + CTP + H(+) = a CDP-1,2-diacyl-sn-glycerol + diphosphate. It functions in the pathway phospholipid metabolism; CDP-diacylglycerol biosynthesis; CDP-diacylglycerol from sn-glycerol 3-phosphate: step 3/3. This Bacillus subtilis (strain 168) protein is Phosphatidate cytidylyltransferase (cdsA).